The chain runs to 751 residues: Polyadenylate-binding protein, cytoplasmic and nuclear (751 aa).

2 stretches are compositionally biased toward polar residues: residues 1–26 and 36–50; these read MSAE…NPAA and ESAS…NQPH. Residues 1-50 are disordered; that stretch reads MSAEVSTTPAADNTVNGTPEATNPAATSAPEVTAVESASPSATPSANQPH. 4 RRM domains span residues 52–130, 140–217, 233–310, and 336–458; these read ASLY…WSQR, GNVF…HHIS, TNVY…RAQK, and VNLY…LAQR. Disordered regions lie at residues 371–413 and 601–643; these read TVTA…KKTE and GQGM…REEV. Over residues 379-413 the composition is skewed to basic and acidic residues; it reads ESEKEKESNKENEKEGEEKTEEKPKESEEEAKKTE. Positions 603–629 are enriched in gly residues; the sequence is GMRGPGYGQGRGGAPVQGGPRPQGGRG. A PABC domain is found at 646–723; sequence TGGLTAQTLN…ALSVYDEYMK (78 aa). A disordered region spans residues 725–751; sequence KGEGEAPAEPAKPKEDAAETATEENKS. The span at 735–751 shows a compositional bias: basic and acidic residues; sequence AKPKEDAAETATEENKS.

This sequence belongs to the polyadenylate-binding protein type-1 family.

The protein localises to the cytoplasm. Its subcellular location is the nucleus. Functionally, binds the poly(A) tail of mRNA. Appears to be an important mediator of the multiple roles of the poly(A) tail in mRNA biogenesis, stability and translation. In the nucleus, involved in both mRNA cleavage and polyadenylation. Is also required for efficient mRNA export to the cytoplasm. Acts in concert with a poly(A)-specific nuclease (PAN) to affect poly(A) tail shortening, which may occur concomitantly with either nucleocytoplasmic mRNA transport or translational initiation. In the cytoplasm, stimulates translation initiation and regulates mRNA decay through translation termination-coupled poly(A) shortening, probably mediated by PAN. The polypeptide is Polyadenylate-binding protein, cytoplasmic and nuclear (pab1) (Neosartorya fischeri (strain ATCC 1020 / DSM 3700 / CBS 544.65 / FGSC A1164 / JCM 1740 / NRRL 181 / WB 181) (Aspergillus fischerianus)).